The chain runs to 155 residues: Anaerobic ribonucleoside-triphosphate reductase-activating protein (155 aa).

Cysteine 26, cysteine 30, and cysteine 33 together coordinate [4Fe-4S] cluster. S-adenosyl-L-methionine is bound by residues 32-34 (GCY) and glycine 74.

Belongs to the organic radical-activating enzymes family. In terms of assembly, forms a tetramer composed of two NrdD and two NrdG subunits. The cofactor is [4Fe-4S] cluster.

The protein localises to the cytoplasm. It carries out the reaction glycyl-[protein] + reduced [flavodoxin] + S-adenosyl-L-methionine = glycin-2-yl radical-[protein] + semiquinone [flavodoxin] + 5'-deoxyadenosine + L-methionine + H(+). Activation of anaerobic ribonucleoside-triphosphate reductase under anaerobic conditions by generation of an organic free radical, using S-adenosylmethionine and reduced flavodoxin as cosubstrates to produce 5'-deoxy-adenosine. The protein is Anaerobic ribonucleoside-triphosphate reductase-activating protein (nrdG) of Vibrio cholerae serotype O1 (strain ATCC 39315 / El Tor Inaba N16961).